Here is a 149-residue protein sequence, read N- to C-terminus: Transcriptional repressor NrdR (149 aa).

The segment at 3 to 34 (CPFCCAVDTKVIDSRLVGEGSSVRRRRQCVVC) is a zinc-finger region. An ATP-cone domain is found at 49 to 139 (PRVVKSNDVR…VYRSFEDIRE (91 aa)).

It belongs to the NrdR family. Zn(2+) serves as cofactor.

In terms of biological role, negatively regulates transcription of bacterial ribonucleotide reductase nrd genes and operons by binding to NrdR-boxes. In Erwinia tasmaniensis (strain DSM 17950 / CFBP 7177 / CIP 109463 / NCPPB 4357 / Et1/99), this protein is Transcriptional repressor NrdR.